The primary structure comprises 201 residues: Adenylyl-sulfate kinase (201 aa).

35–42 (GLSGSGKS) serves as a coordination point for ATP. The Phosphoserine intermediate role is filled by Ser109.

This sequence belongs to the APS kinase family.

The enzyme catalyses adenosine 5'-phosphosulfate + ATP = 3'-phosphoadenylyl sulfate + ADP + H(+). Its pathway is sulfur metabolism; hydrogen sulfide biosynthesis; sulfite from sulfate: step 2/3. In terms of biological role, catalyzes the synthesis of activated sulfate. This Escherichia coli (strain ATCC 8739 / DSM 1576 / NBRC 3972 / NCIMB 8545 / WDCM 00012 / Crooks) protein is Adenylyl-sulfate kinase.